The sequence spans 258 residues: Acyl-[acyl-carrier-protein]--UDP-N-acetylglucosamine O-acyltransferase (258 aa).

This sequence belongs to the transferase hexapeptide repeat family. LpxA subfamily. In terms of assembly, homotrimer.

Its subcellular location is the cytoplasm. The enzyme catalyses a (3R)-hydroxyacyl-[ACP] + UDP-N-acetyl-alpha-D-glucosamine = a UDP-3-O-[(3R)-3-hydroxyacyl]-N-acetyl-alpha-D-glucosamine + holo-[ACP]. The protein operates within glycolipid biosynthesis; lipid IV(A) biosynthesis; lipid IV(A) from (3R)-3-hydroxytetradecanoyl-[acyl-carrier-protein] and UDP-N-acetyl-alpha-D-glucosamine: step 1/6. Its function is as follows. Involved in the biosynthesis of lipid A, a phosphorylated glycolipid that anchors the lipopolysaccharide to the outer membrane of the cell. The polypeptide is Acyl-[acyl-carrier-protein]--UDP-N-acetylglucosamine O-acyltransferase (Pseudomonas aeruginosa (strain LESB58)).